Here is a 393-residue protein sequence, read N- to C-terminus: S-adenosylmethionine synthase (393 aa).

His16 provides a ligand contact to ATP. Asp18 contributes to the Mg(2+) binding site. Glu44 lines the K(+) pocket. Residues Glu57 and Gln100 each contribute to the L-methionine site. A flexible loop region spans residues 100-110 (QSNDIAQGVDH). ATP contacts are provided by residues 167–169 (DAK), 238–239 (RF), Asp247, 253–254 (RK), Ala270, and Lys274. Asp247 serves as a coordination point for L-methionine. L-methionine is bound at residue Lys278.

This sequence belongs to the AdoMet synthase family. Homotetramer; dimer of dimers. Mg(2+) is required as a cofactor. It depends on K(+) as a cofactor.

The protein resides in the cytoplasm. It carries out the reaction L-methionine + ATP + H2O = S-adenosyl-L-methionine + phosphate + diphosphate. Its pathway is amino-acid biosynthesis; S-adenosyl-L-methionine biosynthesis; S-adenosyl-L-methionine from L-methionine: step 1/1. Its function is as follows. Catalyzes the formation of S-adenosylmethionine (AdoMet) from methionine and ATP. The overall synthetic reaction is composed of two sequential steps, AdoMet formation and the subsequent tripolyphosphate hydrolysis which occurs prior to release of AdoMet from the enzyme. This is S-adenosylmethionine synthase from Acidovorax ebreus (strain TPSY) (Diaphorobacter sp. (strain TPSY)).